Consider the following 307-residue polypeptide: Leucine-rich repeat-containing protein 25 (307 aa).

Positions 1–20 are cleaved as a signal peptide; it reads MGGPLMWALLLPLLLHQAGS. Topologically, residues 21–168 are extracellular; sequence QTSSCSVLSG…SCPSGLTKIA (148 aa). N44 and N56 each carry an N-linked (GlcNAc...) asparagine glycan. LRR repeat units follow at residues 63–86 and 87–110; these read SVQL…RDLE and QLQL…XXGC. Residues N95, N132, and N151 are each glycosylated (N-linked (GlcNAc...) asparagine). Residues 169-189 form a helical membrane-spanning segment; sequence IGALAASGSLLLVLAIAGPVL. Residues 190–307 lie on the Cytoplasmic side of the membrane; the sequence is AWRFCRHRMD…DDEEYVVPGR (118 aa). The segment at 205–249 is disordered; sequence TWASQDGSRSGSGRQPRYSSQGRRPKSPANTPPRSSTPDYENVFV. Residues 211–226 show a composition bias toward low complexity; it reads GSRSGSGRQPRYSSQG. Polar residues predominate over residues 232-243; the sequence is PANTPPRSSTPD. Y286 is subject to Phosphotyrosine.

As to quaternary structure, interacts with RIGI. Interacts with SQSTM1. Interacts with p65/RELA; this interaction promotes the degradation of RELA through autophagy.

It is found in the membrane. It localises to the cytoplasm. Plays a role in the inhibition of RLR-mediated type I interferon signaling pathway by targeting RIGI for autophagic degradation. Interacts specifically with ISG15-associated RIGI to promote interaction between RIGI and the autophagic cargo receptor p62/SQSTM1 to mediate RIGI degradation via selective autophagy. Plays also a role in the inhibition of NF-kappa-B signaling pathway and inflammatory response by promoting the degradation of p65/RELA. The polypeptide is Leucine-rich repeat-containing protein 25 (LRRC25) (Bos taurus (Bovine)).